The sequence spans 665 residues: Intraflagellar transport protein 70A (665 aa).

TPR repeat units follow at residues 11 to 44, 45 to 78, 154 to 187, 189 to 221, 393 to 424, 425 to 457, and 459 to 492; these read DGEFTALVYRLIRDARYAEAVQLLGRELQRSPRS, RAGLSLLGYCYYRLQEFALAAECYEQLGQLHPEL, TDGQVNLGCLLYKEGQYEAACSKFSATLQASGYQ, DLSYNLALAYYSSRQYASALKHIAEIIERGIRQ, LTKQVQEARHNRDDEAIKKAVNEYDETMEKYI, PVLMAQAKIYWNLENYPMVEKVFRKSVEFCNDH, and VWKLNVAHVLFMQENKYKEAIGFYEPIVKKHYDN. Residues 508 to 535 are a coiled coil; that stretch reads YIMTSQNEEAEELMRKIEKEEEQLSYDD. The stretch at 544–577 is one TPR 8 repeat; it reads CIVNLVIGTLYCAKGNYEFGISRVIKSLEPYNKK.

The protein belongs to the TTC30/dfy-1/fleer family.

Its subcellular location is the cell projection. It localises to the cilium. Its function is as follows. Required for polyglutamylation of axonemal tubulin. Plays a role in anterograde intraflagellar transport (IFT), the process by which cilia precursors are transported from the base of the cilium to the site of their incorporation at the tip. This is Intraflagellar transport protein 70A from Homo sapiens (Human).